A 417-amino-acid chain; its full sequence is Mast cell carboxypeptidase A (417 aa).

Positions 1–15 (MRLILPVGLIATTLA) are cleaved as a signal peptide. A propeptide spans 16 to 109 (IAPVRFDREK…IEKQFDVKED (94 aa)) (activation peptide). The Peptidase M14 domain maps to 118–412 (KYNNWEKIVA…LAVKFIAKYI (295 aa)). 2 disulfides stabilise this stretch: Cys-173-Cys-186 and Cys-245-Cys-268. Residues His-176 and Glu-179 each coordinate Zn(2+). His-304 lines the Zn(2+) pocket. Glu-378 (proton donor/acceptor) is an active-site residue.

The protein belongs to the peptidase M14 family. It depends on Zn(2+) as a cofactor.

The protein localises to the cytoplasmic vesicle. It is found in the secretory vesicle. It catalyses the reaction Release of a C-terminal amino acid, but little or no action with -Asp, -Glu, -Arg, -Lys or -Pro.. This Homo sapiens (Human) protein is Mast cell carboxypeptidase A (CPA3).